Consider the following 2486-residue polypeptide: Nonribosomal peptide synthetase nanA (2486 aa).

Residues 231–637 are adenylation 1; sequence FSARQPLSPA…GRRGTQVKLR (407 aa). Residues 786-860 enclose the Carrier 1 domain; it reads TDIELKVHAL…DLARSAKETS (75 aa). Serine 820 is modified (O-(pantetheine 4'-phosphoryl)serine). Positions 902–1314 are condensation 1; sequence EDAYPCTPLQ…LKSVPRVSSQ (413 aa). Residues 1339–1735 form an adenylation 2 region; sequence RAQARKTPLA…GRIGDQMKIR (397 aa). Carrier domains lie at 1872-1948 and 2404-2480; these read PPST…SSAS and SSSE…QTQA. O-(pantetheine 4'-phosphoryl)serine occurs at positions 1909 and 2441. A condensation 2 region spans residues 2404–2480; it reads SSSETIVEPL…KLARLLQTQA (77 aa).

The protein belongs to the NRP synthetase family.

It participates in secondary metabolite biosynthesis. Its function is as follows. Nonribosomal peptide synthetase; part of the gene cluster that mediates the biosynthesis of the benzazepine alkaloid nanangelenin A which contains an unprecedented 3,4-dihydro-1-benzazepine-2,5-dione-N-prenyl-N-acetoxy-anthranilamide scaffold. The first step of nanangelenin biosynthesis is catalyzed by the indoleamine 2,3-dioxygenase nanC which produces N-formyl-kynurenine through the catabolism of tryptophan. The two-module NRPS nanA then utilizes anthranilate (Ant) and L-kynurenine (L-Kyn) to assemble the dipeptide product nanangelenin B. The first adenylation domain of nanA (A1) loads anthranilate onto the T1 domain, while A2 loads kynurenine, generated through spontaneous nonenzymatic deformylation of the nanC-supplied N-formyl-kynurenine. The peptide bond formation between the tethered amino acids is catalyzed by the first condensation domain (C1) between anthranilate's carbonyl carbon and kynurenine's aliphatic primary amine. The second C domain (C2) catalyzes the final cyclization event between the aromatic amine of kynurenine and the tethered carbonyl carbon, yielding nanangelenin B. The terminal T3 domain enhances the catalytic efficiency of C2, suggesting the T2-tethered Ant-L-Kyn is transferred to T3 prior to cyclization by C2. Once released from nanA, nanangelenin B is then prenylated by the prenyltransferase nanD to form nanangelenin C. Nanangelenin C is then N-hydroxylated by the FAD-dependent monooxygenase nanF and further acetylated by the acetyltransferase nanB to yield nanangelenin F. Finally, the N-methyltransferase nanE methylates the amide nitrogen of 1-benzazepine to convert nanangelenin F into nanangelenin A. NanE is also able to methylate most of the intermediates of the pathway such as nanangelenin B and nanangelenin C to produce nanangelenin D and nanangelenin E, respectively. This is Nonribosomal peptide synthetase nanA from Aspergillus nanangensis.